We begin with the raw amino-acid sequence, 315 residues long: Cytochrome f (315 aa).

A signal peptide spans 1 to 30 (MRTFLKFSTLVSKGVLVLVCSFFLTASSNA). Tyrosine 31, cysteine 51, cysteine 54, and histidine 55 together coordinate heme. The helical transmembrane segment at 281-300 (IQGLLVFFLFVLLAQVFLVL) threads the bilayer.

It belongs to the cytochrome f family. The 4 large subunits of the cytochrome b6-f complex are cytochrome b6, subunit IV (17 kDa polypeptide, petD), cytochrome f and the Rieske protein, while the 4 small subunits are PetG, PetL, PetM and PetN. The complex functions as a dimer. It depends on heme as a cofactor.

The protein localises to the plastid. The protein resides in the chloroplast thylakoid membrane. In terms of biological role, component of the cytochrome b6-f complex, which mediates electron transfer between photosystem II (PSII) and photosystem I (PSI), cyclic electron flow around PSI, and state transitions. The polypeptide is Cytochrome f (petA) (Chlorella vulgaris (Green alga)).